Consider the following 64-residue polypeptide: Large ribosomal subunit protein bL35 (64 aa).

The segment at 1–43 is disordered; sequence MPKMKSKKSLAKRVIAKKNGTLKRGKAYRSHRATGKTTKQKRH.

Belongs to the bacterial ribosomal protein bL35 family.

The polypeptide is Large ribosomal subunit protein bL35 (Mesoplasma florum (strain ATCC 33453 / NBRC 100688 / NCTC 11704 / L1) (Acholeplasma florum)).